The primary structure comprises 135 residues: Snaclec rhodocetin subunit gamma (135 aa).

Intrachain disulfides connect Cys4/Cys15, Cys32/Cys129, and Cys104/Cys121. Residues 11-130 (YDQHCYQAFN…CQAKNPFVCK (120 aa)) enclose the C-type lectin domain.

The protein belongs to the snaclec family. Heterotetramer of subunit alpha, beta, gamma and delta; only the gamma and the delta subunits are disulfide-linked. Alpha-beta heterodimer and gamma-delta heterodimer associate orthogonally, giving a cruciform conformation. This heterotetramer may covalently dimerizes thanks to the gamma subunit. As to expression, expressed by the venom gland.

The protein localises to the secreted. Potent inhibitor of collagen-induced platelet aggregation. It acts by binding to the integrin alpha2A domain and blocks collagen binding to integrin alpha-2/beta-1 (ITGA2/ITGB1). The gamma/delta subunits mainly contribute to this activity. The polypeptide is Snaclec rhodocetin subunit gamma (Calloselasma rhodostoma (Malayan pit viper)).